The sequence spans 214 residues: ATP-dependent Clp protease proteolytic subunit 2 (214 aa).

S110 functions as the Nucleophile in the catalytic mechanism. The active site involves H135.

Belongs to the peptidase S14 family. In terms of assembly, fourteen ClpP subunits assemble into 2 heptameric rings which stack back to back to give a disk-like structure with a central cavity, resembling the structure of eukaryotic proteasomes.

Its subcellular location is the cytoplasm. The catalysed reaction is Hydrolysis of proteins to small peptides in the presence of ATP and magnesium. alpha-casein is the usual test substrate. In the absence of ATP, only oligopeptides shorter than five residues are hydrolyzed (such as succinyl-Leu-Tyr-|-NHMec, and Leu-Tyr-Leu-|-Tyr-Trp, in which cleavage of the -Tyr-|-Leu- and -Tyr-|-Trp bonds also occurs).. Functionally, cleaves peptides in various proteins in a process that requires ATP hydrolysis. Has a chymotrypsin-like activity. Plays a major role in the degradation of misfolded proteins. The protein is ATP-dependent Clp protease proteolytic subunit 2 of Mycobacterium bovis (strain ATCC BAA-935 / AF2122/97).